Here is a 96-residue protein sequence, read N- to C-terminus: Large ribosomal subunit protein uL23 (96 aa).

It belongs to the universal ribosomal protein uL23 family. Part of the 50S ribosomal subunit. Contacts protein L29, and trigger factor when it is bound to the ribosome.

One of the early assembly proteins it binds 23S rRNA. One of the proteins that surrounds the polypeptide exit tunnel on the outside of the ribosome. Forms the main docking site for trigger factor binding to the ribosome. The polypeptide is Large ribosomal subunit protein uL23 (Solidesulfovibrio magneticus (strain ATCC 700980 / DSM 13731 / RS-1) (Desulfovibrio magneticus)).